The chain runs to 272 residues: Dermonecrotic toxin LvSicTox-alphaIC1bi (272 aa).

Residue His5 is part of the active site. Glu25 and Asp27 together coordinate Mg(2+). His41 serves as the catalytic Nucleophile. 2 disulfides stabilise this stretch: Cys45–Cys51 and Cys47–Cys189. Asp84 contributes to the Mg(2+) binding site.

It belongs to the arthropod phospholipase D family. Class II subfamily. Mg(2+) is required as a cofactor. As to expression, expressed by the venom gland.

Its subcellular location is the secreted. The enzyme catalyses an N-(acyl)-sphingosylphosphocholine = an N-(acyl)-sphingosyl-1,3-cyclic phosphate + choline. It carries out the reaction an N-(acyl)-sphingosylphosphoethanolamine = an N-(acyl)-sphingosyl-1,3-cyclic phosphate + ethanolamine. It catalyses the reaction a 1-acyl-sn-glycero-3-phosphocholine = a 1-acyl-sn-glycero-2,3-cyclic phosphate + choline. The catalysed reaction is a 1-acyl-sn-glycero-3-phosphoethanolamine = a 1-acyl-sn-glycero-2,3-cyclic phosphate + ethanolamine. Functionally, dermonecrotic toxins cleave the phosphodiester linkage between the phosphate and headgroup of certain phospholipids (sphingolipid and lysolipid substrates), forming an alcohol (often choline) and a cyclic phosphate. This toxin acts on sphingomyelin (SM). It may also act on ceramide phosphoethanolamine (CPE), lysophosphatidylcholine (LPC) and lysophosphatidylethanolamine (LPE), but not on lysophosphatidylserine (LPS), and lysophosphatidylglycerol (LPG). It acts by transphosphatidylation, releasing exclusively cyclic phosphate products as second products. Induces dermonecrosis, hemolysis, increased vascular permeability, edema, inflammatory response, and platelet aggregation. The chain is Dermonecrotic toxin LvSicTox-alphaIC1bi from Loxosceles variegata (Recluse spider).